The primary structure comprises 236 residues: Phosphoribosylaminoimidazole-succinocarboxamide synthase (236 aa).

It belongs to the SAICAR synthetase family.

The catalysed reaction is 5-amino-1-(5-phospho-D-ribosyl)imidazole-4-carboxylate + L-aspartate + ATP = (2S)-2-[5-amino-1-(5-phospho-beta-D-ribosyl)imidazole-4-carboxamido]succinate + ADP + phosphate + 2 H(+). Its pathway is purine metabolism; IMP biosynthesis via de novo pathway; 5-amino-1-(5-phospho-D-ribosyl)imidazole-4-carboxamide from 5-amino-1-(5-phospho-D-ribosyl)imidazole-4-carboxylate: step 1/2. The protein is Phosphoribosylaminoimidazole-succinocarboxamide synthase of Chlorobium phaeobacteroides (strain DSM 266 / SMG 266 / 2430).